A 261-amino-acid polypeptide reads, in one-letter code: DNA repair protein RecO (261 aa).

Belongs to the RecO family.

Involved in DNA repair and RecF pathway recombination. In Chlorobium limicola (strain DSM 245 / NBRC 103803 / 6330), this protein is DNA repair protein RecO.